The following is a 315-amino-acid chain: Calumenin-B (315 aa).

Residues 1–19 (MEQWPLLFVVALCILQSSS) form the signal peptide. Positions 22 to 39 (MEKKDRVHHDAPLSNKDH) are enriched in basic and acidic residues. The tract at residues 22–42 (MEKKDRVHHDAPLSNKDHDDE) is disordered. 6 consecutive EF-hand domains span residues 68–103 (ESKERLGKIVEKIDEDHDGFVTADEMKRWIKHAQRR), 104–139 (WIYEDVDRQWQAHDLNSDSFVSWEEYKDATYGYILD), 151–186 (QMMTRDERRFKMADQDGDLRANKEEFTAFLHPEEFD), 188–223 (MKDIVVLETMEDIDKNGDGLIDLNEYIGDMYSQNGD), 229–264 (WVKTEREQFTEFRDKNKDGRMDKDETRDWILPADYD), and 265–300 (HAEAEAKHLLYESDADKDGRLTKQEIVDKYDLFVGS). Residues Asp-81, Asp-83, Asp-85, Glu-92, Asp-117, Asn-119, Asp-121, Glu-128, Asp-164, Asp-166, Asp-168, Arg-170, Glu-175, Asp-201, Asn-203, Asp-205, Glu-212, Asp-242, Asn-244, Asp-246, Arg-248, Glu-253, Asp-278, Asp-280, Asp-282, Arg-284, and Glu-289 each coordinate Ca(2+). The short motif at 312–315 (HDEF) is the Prevents secretion from ER element.

This sequence belongs to the CREC family. Interacts with ggcx.

Its subcellular location is the endoplasmic reticulum membrane. The protein localises to the golgi apparatus. It is found in the secreted. It localises to the melanosome. The protein resides in the sarcoplasmic reticulum lumen. In terms of biological role, involved in regulation of vitamin K-dependent carboxylation of multiple N-terminal glutamate residues. Seems to inhibit gamma-carboxylase ggcx. Binds 7 calcium ions with a low affinity. The polypeptide is Calumenin-B (calub) (Danio rerio (Zebrafish)).